The following is a 904-amino-acid chain: DNA mismatch repair protein MutS (904 aa).

Residue 655–662 (GPNMGGKS) coordinates ATP.

It belongs to the DNA mismatch repair MutS family.

Its function is as follows. This protein is involved in the repair of mismatches in DNA. It is possible that it carries out the mismatch recognition step. This protein has a weak ATPase activity. This Rhizorhabdus wittichii (strain DSM 6014 / CCUG 31198 / JCM 15750 / NBRC 105917 / EY 4224 / RW1) (Sphingomonas wittichii) protein is DNA mismatch repair protein MutS.